Here is a 127-residue protein sequence, read N- to C-terminus: Glycine cleavage system H protein (127 aa).

In terms of domain architecture, Lipoyl-binding spans 24–106 (TATIGITDYA…YAEGWMLKLK (83 aa)). K65 carries the post-translational modification N6-lipoyllysine.

The protein belongs to the GcvH family. The glycine cleavage system is composed of four proteins: P, T, L and H. Requires (R)-lipoate as cofactor.

In terms of biological role, the glycine cleavage system catalyzes the degradation of glycine. The H protein shuttles the methylamine group of glycine from the P protein to the T protein. The protein is Glycine cleavage system H protein of Opitutus terrae (strain DSM 11246 / JCM 15787 / PB90-1).